A 1980-amino-acid chain; its full sequence is Sodium channel protein type 8 subunit alpha (1980 aa).

Disordered regions lie at residues 1 to 20 (MAARLLAPPGPDSFKPFTPE) and 28 to 62 (RIAESKLKKPPKADGSHREDDEDSKPKPNSDLEAG). Residues 1 to 132 (MAARLLAPPG…RIAIKILIHS (132 aa)) are Cytoplasmic-facing. Over residues 28–61 (RIAESKLKKPPKADGSHREDDEDSKPKPNSDLEA) the composition is skewed to basic and acidic residues. The I repeat unit spans residues 114-442 (ILSPFNLIRR…KAMLEQLKKQ (329 aa)). The helical transmembrane segment at 133–151 (VFSMIIMCTILTNCVFMTF) threads the bilayer. The Extracellular portion of the chain corresponds to 152–158 (SNPPDWS). A helical transmembrane segment spans residues 159–179 (KNVEYTFTGIYTFESLVKIIA). Topologically, residues 180–193 (RGFCIDGFTFLRDP) are cytoplasmic. Residues 194–211 (WNWLDFSVIMMAYITEFV) form a helical membrane-spanning segment. Over 212–217 (NLGNVS) the chain is Extracellular. N-linked (GlcNAc...) asparagine glycosylation is present at Asn-215. Residues 218–234 (ALRTFRVLRALKTISVI) traverse the membrane as a helical segment. The Cytoplasmic portion of the chain corresponds to 235-253 (PGLKTIVGALIQSVKKLSD). The helical transmembrane segment at 254–273 (VMILTVFCLSVFALIGLQLF) threads the bilayer. Topologically, residues 274 to 355 (MGNLRNKCVV…PNYGYTSFDT (82 aa)) are extracellular. Cys-281 and Cys-333 form a disulfide bridge. Asn-289, Asn-295, and Asn-308 each carry an N-linked (GlcNAc...) asparagine glycan. Asn-326 is a glycosylation site (N-linked (GlcNAc...) (high mannose) asparagine). Residues 356-380 (FSWAFLALFRLMTQDYWENLYQLTL) constitute an intramembrane region (pore-forming). Glu-373 contacts Na(+). Over 381 to 387 (RAAGKTY) the chain is Extracellular. Residues 388 to 408 (MIFFVLVIFVGSFYLVNLILA) form a helical membrane-spanning segment. The Cytoplasmic portion of the chain corresponds to 409–753 (VVAMAYEEQN…EIVNLIVMDP (345 aa)). Disordered stretches follow at residues 446–530 (AQAA…KAFR) and 568–602 (FRGPGRFRDPGSENEFADDEHSTVEESEGRRDSLF). The segment covering 474 to 486 (PRSSSEISKLSSK) has biased composition (low complexity). The span at 489–500 (KERRNRRKKRKQ) shows a compositional bias: basic residues. Composition is skewed to basic and acidic residues over residues 501–530 (KELSEGEEKGDPEKVFKSESEDGMRRKAFR) and 586–602 (DEHSTVEESEGRRDSLF). Residues Ser-518 and Ser-520 each carry the phosphoserine modification. An II repeat occupies 735-1007 (CHPYWIKLKE…QISVIRIKKG (273 aa)). The helical transmembrane segment at 754 to 772 (FVDLAITICIVLNTLFMAM) threads the bilayer. Residues 773–783 (EHHPMTPQFEH) lie on the Extracellular side of the membrane. Residues 784 to 803 (VLAVGNLVFTGIFTAEMFLK) form a helical membrane-spanning segment. Topologically, residues 804–817 (LIAMDPYYYFQEGW) are cytoplasmic. Residues 818 to 837 (NIFDGFIVSLSLMELSLADV) traverse the membrane as a helical segment. The Extracellular portion of the chain corresponds to 838–839 (EG). A helical transmembrane segment spans residues 840-857 (LSVLRSFRLLRVFKLAKS). At 858-873 (WPTLNMLIKIIGNSVG) the chain is on the cytoplasmic side. A helical membrane pass occupies residues 874 to 892 (ALGNLTLVLAIIVFIFAVV). Residues 893-921 (GMQLFGKSYKECVCKINQDCELPRWHMHD) lie on the Extracellular side of the membrane. A disulfide bond links Cys-906 and Cys-912. Positions 922–942 (FFHSFLIVFRVLCGEWIETMW) form an intramembrane region, pore-forming. Glu-936 and Glu-939 together coordinate Na(+). Over 943 to 955 (DCMEVAGQAMCLI) the chain is Extracellular. A disulfide bond links Cys-944 and Cys-953. The chain crosses the membrane as a helical span at residues 956–976 (VFMMVMVIGNLVVLNLFLALL). The Cytoplasmic portion of the chain corresponds to 977–1199 (LSSFSADNLA…TCFLIVEHNW (223 aa)). Positions 1107–1148 (NLNTEDVSSESDPEGSKDKLDDTSSSEGSTIDIKPEVEEVPV) are disordered. An III repeat occupies 1180–1495 (LGKSWWILRK…KKYYNAMKKL (316 aa)). Residues 1200-1217 (FETFIIFMILLSSGALAF) traverse the membrane as a helical segment. Over 1218–1230 (EDIYIEQRKTIRT) the chain is Extracellular. Residues 1231-1249 (ILEYADKVFTYIFILEMLL) form a helical membrane-spanning segment. At 1250–1263 (KWTAYGFVKFFTNA) the chain is on the cytoplasmic side. Residues 1264-1282 (WCWLDFLIVAVSLVSLIAN) form a helical membrane-spanning segment. Residues 1283–1290 (ALGYSELG) lie on the Extracellular side of the membrane. Residues 1291–1309 (AIKSLRTLRALRPLRALSR) form a helical membrane-spanning segment. Residues 1310-1326 (FEGMRVVVNALVGAIPS) lie on the Cytoplasmic side of the membrane. Residues 1327-1346 (IMNVLLVCLIFWLIFSIMGV) form a helical membrane-spanning segment. Residues 1347-1399 (NLFAGKYHYCFNETSEIRFEIEDVNNKTECEKLMEGNNTEIRWKNVKINFDNV) lie on the Extracellular side of the membrane. Cys-1356 and Cys-1376 form a disulfide bridge. N-linked (GlcNAc...) asparagine glycosylation is found at Asn-1358, Asn-1372, and Asn-1383. An intramembrane region (pore-forming) is located at residues 1400-1421 (GAGYLALLQVATFKGWMDIMYA). At 1422-1438 (AVDSRKPDEQPKYEDNI) the chain is on the extracellular side. A helical transmembrane segment spans residues 1439-1460 (YMYIYFVIFIIFGSFFTLNLFI). The Cytoplasmic portion of the chain corresponds to 1461 to 1523 (GVIIDNFNQQ…IVFDFVTQQA (63 aa)). A Phosphoserine; by PKC modification is found at Ser-1497. An IV repeat occupies 1504 to 1801 (IPRPLNKIQG…WEKFDPDATQ (298 aa)). A helical membrane pass occupies residues 1524 to 1541 (FDIVIMMLICLNMVTMMV). The Extracellular portion of the chain corresponds to 1542 to 1552 (ETDTQSKQMEN). Residues 1553 to 1571 (ILYWINLVFVIFFTCECVL) form a helical membrane-spanning segment. Residues 1572-1583 (KMFALRHYYFTI) lie on the Cytoplasmic side of the membrane. The chain crosses the membrane as a helical span at residues 1584-1601 (GWNIFDFVVVILSIVGMF). The Extracellular portion of the chain corresponds to 1602–1614 (LADIIEKYFVSPT). The chain crosses the membrane as a helical span at residues 1615-1631 (LFRVIRLARIGRILRLI). Over 1632–1650 (KGAKGIRTLLFALMMSLPA) the chain is Cytoplasmic. A helical transmembrane segment spans residues 1651 to 1668 (LFNIGLLLFLVMFIFSIF). At 1669–1690 (GMSNFAYVKHEAGIDDMFNFET) the chain is on the extracellular side. Positions 1691-1713 (FGNSMICLFQITTSAGWDGLLLP) form an intramembrane region, pore-forming. At 1714 to 1742 (ILNRPPDCSLDKEHPGSGFKGDCGNPSVG) the chain is on the extracellular side. A disulfide bridge connects residues Cys-1721 and Cys-1736. The helical transmembrane segment at 1743-1765 (IFFFVSYIIISFLIVVNMYIAII) threads the bilayer. Over 1766 to 1980 (LENFSVATEE…RQKEVRESKC (215 aa)) the chain is Cytoplasmic. Residues 1895–1924 (EEVSAVVLQRAYRGHLARRGFICKKTTSNK) form the IQ domain. The disordered stretch occupies residues 1922-1980 (SNKLENGGTHREKKESTPSTASLPSYDSVTKPEKEKQQRAEEGRRERAKRQKEVRESKC). Residues 1938-1949 (TPSTASLPSYDS) show a composition bias toward polar residues. Positions 1951–1980 (TKPEKEKQQRAEEGRRERAKRQKEVRESKC) are enriched in basic and acidic residues.

Belongs to the sodium channel (TC 1.A.1.10) family. Nav1.6/SCN8A subfamily. As to quaternary structure, the voltage-sensitive sodium channel consists of an ion-conducting pore-forming alpha subunit regulated by one or more beta-1 (SCN1B), beta-2 (SCN2B), beta-3 (SCN3B) and/or beta-4 (SCN4B) subunits. Beta-1 (SCN1B) and beta-3 (SCN3B) are non-covalently associated with alpha, while beta-2 (SCN2B) and beta-4 (SCN4B) are covalently linked by disulfide bonds. Interacts with NEDD4 and NEDD4L. Interacts with FGF13. Interacts with FGF14, GBG3, GBB2 and SCN1B. Interacts with TMEM233. Interacts with the conotoxin GVIIJ. Interacts with the spider beta/delta-theraphotoxin-Pre1a. Interacts with CALM1; the interaction modulates the inactivation rate of SCN8A. May be ubiquitinated by NEDD4L; which would promote its endocytosis. Post-translationally, phosphorylation at Ser-1497 by PKC in a highly conserved cytoplasmic loop slows inactivation of the sodium channel and reduces peak sodium currents. Expressed in the hippocampus with increased expression in epileptic tissue compared to normal adjacent tissue (at protein level). As to expression, expressed in non-neuronal tissues, such as monocytes/macrophages.

Its subcellular location is the cell membrane. It is found in the cell projection. It localises to the axon. The protein resides in the cytoplasmic vesicle. The protein localises to the podosome. It carries out the reaction Na(+)(in) = Na(+)(out). Its activity is regulated as follows. Inhibited by tetrodotoxin and, more weakly, by its metabolite 4,9-ah-tetrodotoxin. Functionally, pore-forming subunit of a voltage-gated sodium channel complex assuming opened or closed conformations in response to the voltage difference across membranes and through which sodium ions selectively pass along their electrochemical gradient. Contributes to neuronal excitability by regulating action potential threshold and propagation. In terms of biological role, more specifically expressed in non-neuronal cells, could play a role in sodium release from intracellular compartments and participate in the control of podosomes formation and macrophages adhesion and movement. This is Sodium channel protein type 8 subunit alpha from Homo sapiens (Human).